A 124-amino-acid polypeptide reads, in one-letter code: Small ribosomal subunit protein uS12 (124 aa).

D89 carries the 3-methylthioaspartic acid modification.

It belongs to the universal ribosomal protein uS12 family. In terms of assembly, part of the 30S ribosomal subunit. Contacts proteins S8 and S17. May interact with IF1 in the 30S initiation complex.

Its function is as follows. With S4 and S5 plays an important role in translational accuracy. In terms of biological role, interacts with and stabilizes bases of the 16S rRNA that are involved in tRNA selection in the A site and with the mRNA backbone. Located at the interface of the 30S and 50S subunits, it traverses the body of the 30S subunit contacting proteins on the other side and probably holding the rRNA structure together. The combined cluster of proteins S8, S12 and S17 appears to hold together the shoulder and platform of the 30S subunit. The protein is Small ribosomal subunit protein uS12 of Acinetobacter baumannii (strain AB307-0294).